We begin with the raw amino-acid sequence, 159 residues long: SsrA-binding protein (159 aa).

A compositionally biased stretch (basic and acidic residues) spans 133-147 (KRQDLAKRDAQREMA). A disordered region spans residues 133-159 (KRQDLAKRDAQREMARAAGRRSKGMDD). Over residues 150–159 (AGRRSKGMDD) the composition is skewed to basic residues.

It belongs to the SmpB family.

The protein resides in the cytoplasm. Required for rescue of stalled ribosomes mediated by trans-translation. Binds to transfer-messenger RNA (tmRNA), required for stable association of tmRNA with ribosomes. tmRNA and SmpB together mimic tRNA shape, replacing the anticodon stem-loop with SmpB. tmRNA is encoded by the ssrA gene; the 2 termini fold to resemble tRNA(Ala) and it encodes a 'tag peptide', a short internal open reading frame. During trans-translation Ala-aminoacylated tmRNA acts like a tRNA, entering the A-site of stalled ribosomes, displacing the stalled mRNA. The ribosome then switches to translate the ORF on the tmRNA; the nascent peptide is terminated with the 'tag peptide' encoded by the tmRNA and targeted for degradation. The ribosome is freed to recommence translation, which seems to be the essential function of trans-translation. This is SsrA-binding protein from Salinispora arenicola (strain CNS-205).